The chain runs to 310 residues: Ribose-phosphate pyrophosphokinase (310 aa).

ATP contacts are provided by residues 34–36 (DQE) and 93–94 (RQ). Mg(2+) is bound by residues H127 and D167. Residue K190 is part of the active site. D-ribose 5-phosphate contacts are provided by residues R192, D216, and 220 to 224 (DSGGT).

This sequence belongs to the ribose-phosphate pyrophosphokinase family. Class I subfamily. Homohexamer. It depends on Mg(2+) as a cofactor.

The protein localises to the cytoplasm. The catalysed reaction is D-ribose 5-phosphate + ATP = 5-phospho-alpha-D-ribose 1-diphosphate + AMP + H(+). It functions in the pathway metabolic intermediate biosynthesis; 5-phospho-alpha-D-ribose 1-diphosphate biosynthesis; 5-phospho-alpha-D-ribose 1-diphosphate from D-ribose 5-phosphate (route I): step 1/1. Functionally, involved in the biosynthesis of the central metabolite phospho-alpha-D-ribosyl-1-pyrophosphate (PRPP) via the transfer of pyrophosphoryl group from ATP to 1-hydroxyl of ribose-5-phosphate (Rib-5-P). This Brucella melitensis biotype 1 (strain ATCC 23456 / CCUG 17765 / NCTC 10094 / 16M) protein is Ribose-phosphate pyrophosphokinase.